A 288-amino-acid polypeptide reads, in one-letter code: Bifunctional protein FolD (288 aa).

Residues 166–168, Ser191, and Val232 each bind NADP(+); that span reads GRS.

Belongs to the tetrahydrofolate dehydrogenase/cyclohydrolase family. As to quaternary structure, homodimer.

It carries out the reaction (6R)-5,10-methylene-5,6,7,8-tetrahydrofolate + NADP(+) = (6R)-5,10-methenyltetrahydrofolate + NADPH. The enzyme catalyses (6R)-5,10-methenyltetrahydrofolate + H2O = (6R)-10-formyltetrahydrofolate + H(+). It functions in the pathway one-carbon metabolism; tetrahydrofolate interconversion. In terms of biological role, catalyzes the oxidation of 5,10-methylenetetrahydrofolate to 5,10-methenyltetrahydrofolate and then the hydrolysis of 5,10-methenyltetrahydrofolate to 10-formyltetrahydrofolate. The chain is Bifunctional protein FolD from Roseiflexus castenholzii (strain DSM 13941 / HLO8).